We begin with the raw amino-acid sequence, 714 residues long: EtfAB:quinone oxidoreductase (714 aa).

Transmembrane regions (helical) follow at residues 25–45 (YEWL…FGFW), 87–107 (AGWM…AAGI), 125–145 (IGFS…VMVL), 164–184 (DGWI…IEGL), 207–227 (PFGW…MLMW), and 236–256 (MAIA…HIFA). 4Fe-4S ferredoxin-type domains lie at 293 to 324 (WKDL…LNPK) and 375 to 405 (YDVV…HIPK). [4Fe-4S] cluster contacts are provided by C302, C305, C308, C312, C386, C389, C392, and C396.

As to quaternary structure, might constitute a membrane-associated complex with EtfA (Swol_0697), EtfB (Swol_0696), and the butyryl-CoA dehydrogenase Swol_1933 and/or Swol_2052. The cofactor is [4Fe-4S] cluster.

It is found in the cell membrane. The protein operates within lipid metabolism; butanoate metabolism. In terms of biological role, oxidoreductase involved in syntrophic growth of S.wolfei with butyrate. Is presumed to link the electron flow from butyryl-CoA dehydrogenases to the membrane, in conjunction with the electron transfer flavoprotein EtfAB. May transfer electrons to the menaquinone pool of the membrane. This Syntrophomonas wolfei subsp. wolfei (strain DSM 2245B / Goettingen) protein is EtfAB:quinone oxidoreductase.